The sequence spans 357 residues: Protein MGF 360-14L (357 aa).

This sequence belongs to the asfivirus MGF 360 family. In terms of assembly, interacts with host IRF3 and TRIM21; these interactions mediates degradation of IRF3 through TRIM21 and ubiquitin-meditated proteolysis.

The protein localises to the host cytoplasm. Functionally, plays a role in virus cell tropism, and may be required for efficient virus replication in macrophages. Also inhibits the host cGAS/STING-mediated type I interferon production by inducing host IRF3 degradation through the proteasome pathway. The sequence is that of Protein MGF 360-14L from Ornithodoros (relapsing fever ticks).